The chain runs to 473 residues: Ornithine aminotransferase, mitochondrial (473 aa).

The transit peptide at 1–32 directs the protein to the mitochondrion; sequence MAAALARRGGGGLARALARGRGMCSATAAERA. Position 293 is an N6-(pyridoxal phosphate)lysine (Lys293).

Belongs to the class-III pyridoxal-phosphate-dependent aminotransferase family. As to quaternary structure, homotetramer. Pyridoxal 5'-phosphate is required as a cofactor.

The protein resides in the mitochondrion matrix. It carries out the reaction a 2-oxocarboxylate + L-ornithine = L-glutamate 5-semialdehyde + an L-alpha-amino acid. It participates in amino-acid biosynthesis; L-proline biosynthesis; L-glutamate 5-semialdehyde from L-ornithine: step 1/1. Its function is as follows. Confers drought and oxidative stress tolerance mainly through enhancing ROS-scavenging capacity and Pro pre-accumulation. The protein is Ornithine aminotransferase, mitochondrial (OAT) of Oryza sativa subsp. japonica (Rice).